The sequence spans 161 residues: Large ribosomal subunit protein uL11 (161 aa).

The protein belongs to the universal ribosomal protein uL11 family. As to quaternary structure, part of the ribosomal stalk of the 50S ribosomal subunit. Interacts with L10 and the large rRNA to form the base of the stalk. L10 forms an elongated spine to which L12 dimers bind in a sequential fashion forming a multimeric L10(L12)X complex.

Its function is as follows. Forms part of the ribosomal stalk which helps the ribosome interact with GTP-bound translation factors. In Methanocaldococcus jannaschii (strain ATCC 43067 / DSM 2661 / JAL-1 / JCM 10045 / NBRC 100440) (Methanococcus jannaschii), this protein is Large ribosomal subunit protein uL11.